We begin with the raw amino-acid sequence, 289 residues long: Shikimate kinase (289 aa).

84–94 (PVASGLSSSSA) is an ATP binding site.

It belongs to the GHMP kinase family. Archaeal shikimate kinase subfamily.

It is found in the cytoplasm. The enzyme catalyses shikimate + ATP = 3-phosphoshikimate + ADP + H(+). It functions in the pathway metabolic intermediate biosynthesis; chorismate biosynthesis; chorismate from D-erythrose 4-phosphate and phosphoenolpyruvate: step 5/7. The chain is Shikimate kinase (aroK) from Methanothermobacter thermautotrophicus (strain ATCC 29096 / DSM 1053 / JCM 10044 / NBRC 100330 / Delta H) (Methanobacterium thermoautotrophicum).